The chain runs to 430 residues: MSEREVRLWPEFVKALKQEVVPALGCTEPISLALAAALAARELGKAPERIDAWVSANLMKNGMGVTVPGTGTVGLPIAAAVGALGGDPDAKLEVLKNLTVEQVAAGKQMLADGKVKLGVAAVPNILYAEACVWHGDECARVAIADAHTNVIKIELNGEVKLKREAADAKPVETYDLGDATARDVYDFAMRAPLDSIAFIHDAAVLNSALADEGMSGKYGLHIGATLQRQIEAGLLSEGLLSNILTRTTAASDARMGGATLPAMSNSGSGNQGIAATMPVVAVAEHVKADRETLIRALALSHLIAVYIHTRLPKLSALCAVTTASMGAAAGMAQLLNGGYPAVSMAISSMIGDLAGMICDGASNSCAMKVSTSAGSGYKAVLMALDGTRVTGNEGIVAHDVDVSIANLGKLATQGMAQTDTQILQIMMDKR.

Belongs to the UPF0597 family.

The polypeptide is UPF0597 protein CV_1824 (Chromobacterium violaceum (strain ATCC 12472 / DSM 30191 / JCM 1249 / CCUG 213 / NBRC 12614 / NCIMB 9131 / NCTC 9757 / MK)).